The sequence spans 1225 residues: Hybrid signal transduction histidine kinase C (1225 aa).

The helical transmembrane segment at 8–28 (GFLLSTLFFTIISIILFYFFI) threads the bilayer. Over residues 313 to 356 (LSPRSLSSSSSSSPSSSNNNGNTNNSGSLSPRSSNSNGSAVSPR) the composition is skewed to low complexity. Positions 313–407 (LSPRSLSSSS…SNGTISSPRT (95 aa)) are disordered. Over residues 357–368 (NVSSNSMSPRGQ) the composition is skewed to polar residues. Residues 370–388 (SDRSISSPRGSSSSSSSSS) are compositionally biased toward low complexity. Residues 389-407 (NELAISPRNSNGTISSPRT) are compositionally biased toward polar residues. The region spanning 426–653 (HLSHELRTPI…TFHFVIPLET (228 aa)) is the Histidine kinase domain. A Phosphohistidine; by autocatalysis modification is found at histidine 429. The Response regulatory 1 domain occupies 669 to 784 (SVLVVDKNPY…HLVACLLASM (116 aa)). A 4-aspartylphosphate modification is found at aspartate 721. 3 disordered regions span residues 809–832 (NNINNNSNNNNNNMQTHNSNSVYG), 941–974 (DDDSNNYCNTTGTMDSIDEINKNNYSDSESDELN), and 1021–1076 (YLSP…PRAP). A compositionally biased stretch (polar residues) spans 945–954 (NNYCNTTGTM). The span at 1023 to 1037 (SPRSMNNNNGNNDNG) shows a compositional bias: low complexity. The segment covering 1058-1072 (TSDTSSLAQSPNSLS) has biased composition (polar residues). Residues 1078-1200 (KIMILDDNPV…CLELILRKWE (123 aa)) form the Response regulatory 2 domain. At aspartate 1127 the chain carries 4-aspartylphosphate.

The protein localises to the membrane. The enzyme catalyses ATP + protein L-histidine = ADP + protein N-phospho-L-histidine.. In terms of biological role, acts in a signal transduction pathway that regulates the slug versus culmination choice. Believed to be the first component of a phosphorelay that couples the sensing of ammonia to the modulation of PKA activity and hence activates culmination and spore germination. Ammonium transporters amtA and amtC are thought to respectively activate and inhibit dhkC phosphorelay. This protein probably undergoes an ATP-dependent autophosphorylation at conserved His residue in the kinase core, and a phosphoryl group is then transferred to a conserved aspartate residue in the receiver domain. The sequence is that of Hybrid signal transduction histidine kinase C (dhkC) from Dictyostelium discoideum (Social amoeba).